The primary structure comprises 459 residues: Flavin-containing monooxygenase FMO GS-OX1 (459 aa).

17–22 contacts FAD; sequence GAGAAG. 211–216 contacts NADP(+); the sequence is GNYASG.

It belongs to the FMO family. FAD serves as cofactor. In terms of tissue distribution, mainly expressed in leaves. Low levels in flowers and seeds.

It carries out the reaction a (Z)-omega-(methylsulfanyl)-N-sulfo-alkylhydroximate S-glucoside + NADPH + O2 + H(+) = a (Z)-omega-(methylsulfinyl)-alkyl-glucosinolate + NADP(+) + H2O. In terms of biological role, catalyzes the conversion of methylthioalkyl glucosinolates into methylsulfinylalkyl glucosinolates. Able to S-oxygenate both desulfo- and intact 4-methylthiobutyl glucosinolates, but no activity with methionine, dihomomethionine or 5-methylthiopentaldoxime. In Arabidopsis thaliana (Mouse-ear cress), this protein is Flavin-containing monooxygenase FMO GS-OX1 (FMOGS-OX1).